The primary structure comprises 138 residues: MREENKGMPSGGGSDEGLASAAARGLVEKVRQLLEAGADPNGVNRFGRRAIQVMMMGSARVAELLLLHGAEPNCADPATLTRPVHDAAREGFLDTLVVLHRAGARLDVRDAWGRLPVDLAEERGHRDVAGYLRTATGD.

One copy of the ANK 1; truncated repeat lies at 13-39; sequence GSDEGLASAAARGLVEKVRQLLEAGAD. ANK repeat units follow at residues 46–74, 79–108, and 112–138; these read FGRR…EPNC, TLTR…RLDV, and WGRL…ATGD.

Belongs to the CDKN2 cyclin-dependent kinase inhibitor family. As to quaternary structure, heterodimer of CDKN2B with CDK4 or CDK6. Isoform 2 does not interact with CDK4 nor CDK6. As to expression, isoform 2 is expressed in normal (keratinocytes, fibroblasts) and tumor cell lines.

The protein resides in the cytoplasm. In terms of biological role, interacts strongly with CDK4 and CDK6. Potent inhibitor. Potential effector of TGF-beta induced cell cycle arrest. This is Cyclin-dependent kinase 4 inhibitor B (CDKN2B) from Homo sapiens (Human).